The chain runs to 141 residues: Hemoglobin subunit alpha (141 aa).

The 141-residue stretch at 1-141 (VLSSADKNNV…VSTVLTSKYR (141 aa)) folds into the Globin domain. The residue at position 3 (S3) is a Phosphoserine. Residues K7 and K11 each carry the N6-succinyllysine modification. K16 carries the N6-acetyllysine; alternate modification. An N6-succinyllysine; alternate modification is found at K16. Phosphotyrosine is present on Y24. S35 carries the phosphoserine modification. K40 bears the N6-succinyllysine mark. Residue S49 is modified to Phosphoserine. H58 contacts O2. H87 contacts heme b. S102 bears the Phosphoserine mark. Phosphothreonine is present on T108. Residue S124 is modified to Phosphoserine. Residues T134 and T137 each carry the phosphothreonine modification. S138 is subject to Phosphoserine.

Belongs to the globin family. In terms of assembly, heterotetramer of two alpha chains and two beta chains. As to expression, red blood cells.

In terms of biological role, involved in oxygen transport from the lung to the various peripheral tissues. Hemopressin acts as an antagonist peptide of the cannabinoid receptor CNR1. Hemopressin-binding efficiently blocks cannabinoid receptor CNR1 and subsequent signaling. This Panthera tigris sumatrae (Sumatran tiger) protein is Hemoglobin subunit alpha (HBA).